Here is a 61-residue protein sequence, read N- to C-terminus: Conotoxin Vn5.3 (61 aa).

The first 19 residues, 1-19 (MRCLPVFVILLLLIASAPG), serve as a signal peptide directing secretion. Positions 20–50 (VDVQPKTKYYVPRASRRDFAKKTPKRLSKLR) are excised as a propeptide.

This sequence belongs to the conotoxin T superfamily. Contains 2 disulfide bonds that can be either 'C1-C3, C2-C4' or 'C1-C4, C2-C3', since these disulfide connectivities have been observed for conotoxins with cysteine framework V (for examples, see AC P0DQQ7 and AC P81755). In terms of tissue distribution, expressed by the venom duct.

The protein localises to the secreted. This is Conotoxin Vn5.3 from Conus ventricosus (Mediterranean cone).